We begin with the raw amino-acid sequence, 232 residues long: Ion-translocating oxidoreductase complex subunit E (232 aa).

6 consecutive transmembrane segments (helical) span residues 18-38, 39-59, 69-89, 93-113, 128-148, and 182-202; these read GLVQLLGLCPLLAVTATLTNA, LGLGLATVAVLIGSNVLVSLV, IPVFVMIIAALVTVVQLVINA, GLYLSLGIFLPLIVTNCVIIG, AFDGLMMGTGFTAVLAVLGAV, and SFLLAMLPPGAFIAMGLLIAG.

Belongs to the NqrDE/RnfAE family. In terms of assembly, the complex is composed of six subunits: RnfA, RnfB, RnfC, RnfD, RnfE and RnfG.

It localises to the cell inner membrane. Part of a membrane-bound complex that couples electron transfer with translocation of ions across the membrane. The sequence is that of Ion-translocating oxidoreductase complex subunit E from Shewanella amazonensis (strain ATCC BAA-1098 / SB2B).